A 968-amino-acid polypeptide reads, in one-letter code: MPFTLGQRWISDTESELGLGTVVAVDARTVTLLFPSTGENRLYARSDSPVTRVMFNPGDTITSHDGWQMQVEEVKEENGLLTYIGTRLDTEESGVALREVFLDSKLVFSKPQDRLFAGQIDRMDRFALRYRARKYSSEQFRMPYSGLRGQRTSLIPHQLNIAHDVGRRHAPRVLLADEVGLGKTIEAGMILHQQLLSGAAERVLIIVPETLQHQWLVEMLRRFNLRFALFDDERYAEAQHDAYNPFDTEQLVICSLDFARRSKQRLEHLCEAEWDLLVVDEAHHLVWSEDAPSREYQAIEQLAEHVPGVLLLTATPEQLGMESHFARLRLLDPNRFHDFAQFVEEQKNYRPVADAVAMLLAGNKLSNDELNMLGEMIGEQDIEPLLQAANSDSEDAQSARQELVSMLMDRHGTSRVLFRNTRNGVKGFPKRELHTIKLPLPTQYQTAIKVSGIMGARKSAEDRARDMLYPERIYQEFEGDNATWWNFDPRVEWLMGYLTSHRSQKVLVICAKAATALQLEQVLREREGIRAAVFHEGMSIIERDRAAAWFAEEDTGAQVLLCSEIGSEGRNFQFASHMVMFDLPFNPDLLEQRIGRLDRIGQAHDIQIHVPYLEKTAQSVLVRWYHEGLDAFEHTCPTGRTIYDSVYNDLINYLASPDQTEGFDDLIKNCREQHEALKAQLEQGRDRLLEIHSNGGEKAQALAESIEEQDDDTNLIAFAMNLFDIIGINQDDRGDNMIVLTPSDHMLVPDFPGLSEDGITITFDREVALAREDAQFITWEHPLIRNGLDLILSGDTGSSTISLLKNKALPVGTLLVELIYVVEAQAPKQLQLNRFLPPTPVRMLLDKNGNNLAAQVEFETFNRQLNAVNRHTGSKLVNAVQQDVHAILQLGEAQIEKSARALIDAARNEADEKLSAELSRLEALRAVNPNIRDDELTAIESNRQQIMESLDQAGWRLDALRLIVVTHQ.

Residues 164-334 (DVGRRHAPRV…FARLRLLDPN (171 aa)) form the Helicase ATP-binding domain. 177 to 184 (DEVGLGKT) serves as a coordination point for ATP. The DEAH box motif lies at 280–283 (DEAH). Residues 490–662 (RVEWLMGYLT…YLASPDQTEG (173 aa)) enclose the Helicase C-terminal domain.

The protein belongs to the SNF2/RAD54 helicase family. RapA subfamily. As to quaternary structure, interacts with the RNAP. Has a higher affinity for the core RNAP than for the holoenzyme. Its ATPase activity is stimulated by binding to RNAP.

Transcription regulator that activates transcription by stimulating RNA polymerase (RNAP) recycling in case of stress conditions such as supercoiled DNA or high salt concentrations. Probably acts by releasing the RNAP, when it is trapped or immobilized on tightly supercoiled DNA. Does not activate transcription on linear DNA. Probably not involved in DNA repair. The polypeptide is RNA polymerase-associated protein RapA (Escherichia coli O139:H28 (strain E24377A / ETEC)).